The primary structure comprises 116 residues: Putative pterin-4-alpha-carbinolamine dehydratase (116 aa).

This sequence belongs to the pterin-4-alpha-carbinolamine dehydratase family.

It carries out the reaction (4aS,6R)-4a-hydroxy-L-erythro-5,6,7,8-tetrahydrobiopterin = (6R)-L-erythro-6,7-dihydrobiopterin + H2O. The chain is Putative pterin-4-alpha-carbinolamine dehydratase from Stenotrophomonas maltophilia (strain K279a).